Consider the following 550-residue polypeptide: Leucine-rich repeat LGI family member 2 (550 aa).

The first 25 residues, 1–25 (MALWRGGGALGLLLLSAACLIPPSA), serve as a signal peptide directing secretion. An LRRNT domain is found at 26–62 (QVRRLARCPATCSCTKESIICVGSSWVPRIVPGDISS). Asparagine 67 carries an N-linked (GlcNAc...) asparagine glycan. LRR repeat units follow at residues 83 to 104 (SLQL…AFAG) and 107 to 128 (HLEY…AFRG). In terms of domain architecture, LRRCT spans 140–190 (NKFECDCKAKWLYLWLKMTNSTVSDVLCIGPPEYQEKKLNEVTSFDYECTT). Asparagine 159 is a glycosylation site (N-linked (GlcNAc...) asparagine). 7 EAR repeats span residues 224 to 266 (DFVV…EWDH), 270 to 312 (NFRS…KYDE), 316 to 363 (KFVK…KWNS), 365 to 408 (GFYS…QWNK), 412 to 455 (KFVP…RWNS), 457 to 499 (QFVE…QWDK), and 503 to 545 (QFKK…EHII). A glycan (N-linked (GlcNAc...) asparagine) is linked at asparagine 276. N-linked (GlcNAc...) asparagine glycosylation is present at asparagine 407.

As to expression, brain.

The protein resides in the secreted. Its function is as follows. Required for the development of soma-targeting inhibitory GABAergic synapses made by parvalbumin-positive basket cells. In Mus musculus (Mouse), this protein is Leucine-rich repeat LGI family member 2 (Lgi2).